The sequence spans 417 residues: Glutamyl-tRNA reductase (417 aa).

Residues 49 to 52 (TCNR), Ser-107, 112 to 114 (EEQ), and Gln-118 each bind substrate. The Nucleophile role is filled by Cys-50. Residue 187 to 192 (GTGEVS) coordinates NADP(+).

This sequence belongs to the glutamyl-tRNA reductase family. In terms of assembly, homodimer.

The enzyme catalyses (S)-4-amino-5-oxopentanoate + tRNA(Glu) + NADP(+) = L-glutamyl-tRNA(Glu) + NADPH + H(+). It participates in porphyrin-containing compound metabolism; protoporphyrin-IX biosynthesis; 5-aminolevulinate from L-glutamyl-tRNA(Glu): step 1/2. Its function is as follows. Catalyzes the NADPH-dependent reduction of glutamyl-tRNA(Glu) to glutamate 1-semialdehyde (GSA). The sequence is that of Glutamyl-tRNA reductase from Cenarchaeum symbiosum (strain A).